Reading from the N-terminus, the 270-residue chain is Meiotic recombination 1 protein (270 aa).

The KH domain occupies 191 to 225; sequence EIKLNKTQITFLIGAKGTRIESLREKSGASIKIIP.

Its function is as follows. Required for chromosome pairing and genetic recombination. MER1 may function to bring the axial elements of the synaptonemal complex corresponding to homologous chromosomes together by initiating recombination. MER1 might be responsible for regulating the MER2 gene and/or gene product. This chain is Meiotic recombination 1 protein (MER1), found in Saccharomyces cerevisiae (strain ATCC 204508 / S288c) (Baker's yeast).